The following is a 707-amino-acid chain: MPSATSHSGSGSKSSGPPPPSGSSGSEAAAGAAAPASQHPATGTGAVQTEAMKQILGVIDKKLRNLEKKKGKLDDYQERMNKGERLNQDQLDAVSKYQEVTNNLEFAKELQRSFMALSQDIQKTIKKTARREQLMREEAEQKRLKTVLELQYVLDKLGDDDVRTDLKQGLSGVPILSEEELSLLDEFYKLVDPERDMSLRLNEQYEHASIHLWDLLEGKEKPVCGTTYKALKEIVERVFQSNYFDSTHNHQNGLCEEEEAASAPIVEDQVAEAEPEPTEEYTEQSEVESTEYVNRQFMAETQFSSGEKEQVDEWAVETVEVVNSLQQQPQAASPSVPEPHSLTPVAQSDPLVRRQRVQDLMAQMQGPYNFIQDSMLDFENQTLDPAIVSAQPMNPTQNMDMPQLVCPQVHSESRLAQSNQVPVQPEATQVPLVSSTSEGYTASQPLYQPSHAAEQRPQKEPIDQIQATISLNTEQTTASSSLPAASQPQVFQAGASKPLHSSGINVNAAPFQSMQTVFNMNAPVPPVNEPETLKQQSQYQASYNQSFSSQPHQVEQTELQQDQLQTVVGTYHGSQDQPHQVPGNHQQPPQQSTGFPRSSQPYYNSRGVSRGGSRGARGLMNGYRGPANGFRGGYDGYRSSFSNTPNSGYTQSQFNAPRDYSGYQRDGYQQNFKRGSGQSGPRGAPRGRGGPPRPNRGMPQMNTQQVN.

2 stretches are compositionally biased toward low complexity: residues 1 to 15 and 22 to 43; these read MPSA…SKSS and GSSG…PATG. Positions 1 to 48 are disordered; that stretch reads MPSATSHSGSGSKSSGPPPPSGSSGSEAAAGAAAPASQHPATGTGAVQ. Pro2 is modified (N-acetylproline). Ser10 carries the phosphoserine modification. Positions 58 to 92 form a coiled coil; sequence VIDKKLRNLEKKKGKLDDYQERMNKGERLNQDQLD. Ser113 is modified (phosphoserine). A coiled-coil region spans residues 123–151; it reads KTIKKTARREQLMREEAEQKRLKTVLELQ. Position 163 is an omega-N-methylarginine (Arg163). The disordered stretch occupies residues 325-347; sequence LQQQPQAASPSVPEPHSLTPVAQ. Over residues 326–335 the composition is skewed to low complexity; sequence QQQPQAASPS. Phosphoserine is present on residues Ser333 and Ser341. The G3BP1-binding stretch occupies residues 358 to 379; the sequence is QDLMAQMQGPYNFIQDSMLDFE. 3 disordered regions span residues 412–443, 523–558, and 570–620; these read ESRL…YTAS, PVPP…EQTE, and TYHG…RGLM. The span at 431–443 shows a compositional bias: polar residues; that stretch reads PLVSSTSEGYTAS. Low complexity predominate over residues 535-558; that stretch reads QQSQYQASYNQSFSSQPHQVEQTE. Positions 572-603 are enriched in polar residues; sequence HGSQDQPHQVPGNHQQPPQQSTGFPRSSQPYY. Tyr623 is subject to Phosphotyrosine. An omega-N-methylarginine mark is found at Arg624 and Arg631. Phosphotyrosine is present on residues Tyr634 and Tyr637. An Omega-N-methylarginine modification is found at Arg638. Positions 641–655 are enriched in polar residues; sequence FSNTPNSGYTQSQFN. A disordered region spans residues 641 to 707; that stretch reads FSNTPNSGYT…MPQMNTQQVN (67 aa). Residues Ser642 and Ser647 are each glycosylated (O-linked (GlcNAc) serine). Tyr649, Tyr660, Tyr663, and Tyr668 each carry phosphotyrosine. 2 stretches are compositionally biased toward low complexity: residues 674-684 and 695-707; these read RGSGQSGPRGA and NRGM…QQVN. Arg696 is modified (asymmetric dimethylarginine; alternate). Arg696 bears the Omega-N-methylarginine; alternate mark.

This sequence belongs to the caprin family. As to quaternary structure, may form homomultimers. Interacts with G3BP1; interaction is direct and promotes stress granule formation. Interacts with G3BP2; interaction is direct and promotes stress granule formation. Interacts with PQBP1. Interacts with DDX3X. Interacts (when phosphorylated by EPHA4) with FMR1; interaction with FMR1 promotes formation of a membraneless compartment. Tyrosine phosphorylation by EPHA4 promotes interaction with FMR1 and liquid-liquid phase separation (LLPS) for the formation of a membraneless compartment that concentrates mRNAs with associated regulatory factors. Post-translationally, O-glycosylated (O-GlcNAcylated), in a cell cycle-dependent manner. O-glycosylation by OGT inhibit ability to undergo liquid-liquid phase separation (LLPS). As to expression, expressed in hippocampal and neocortical pyramidal neurons, but not in Purkinje cells.

The protein localises to the cytoplasm. It localises to the cytoplasmic ribonucleoprotein granule. It is found in the cytosol. The protein resides in the cell projection. Its subcellular location is the dendrite. The protein localises to the lamellipodium. Ability to mediate liquid-liquid phase separation is regulated by ATP: moderate concentrations of ATP enhance phase separation, whereas high concentrations of ATP lead to inhibition of phase separation. Functionally, mRNA-binding protein that acts as a regulator of mRNAs transport, translation and/or stability, and which is involved in neurogenesis, synaptic plasticity in neurons and cell proliferation and migration in multiple cell types. Plays an essential role in cytoplasmic stress granule formation. Acts as an mRNA regulator by mediating formation of some phase-separated membraneless compartment: undergoes liquid-liquid phase separation upon binding to target mRNAs, leading to assemble mRNAs into cytoplasmic ribonucleoprotein granules that concentrate mRNAs with associated regulatory factors. Undergoes liquid-liquid phase separation following phosphorylation and interaction with FMR1, promoting formation of cytoplasmic ribonucleoprotein granules that concentrate mRNAs with factors that inhibit translation and mediate deadenylation of target mRNAs. In these cytoplasmic ribonucleoprotein granules, CAPRIN1 mediates recruitment of CNOT7 deadenylase, leading to mRNA deadenylation and degradation. Binds directly and selectively to MYC and CCND2 mRNAs. In neuronal cells, directly binds to several mRNAs associated with RNA granules, including BDNF, CAMK2A, CREB1, MAP2, NTRK2 mRNAs, as well as to GRIN1 and KPNB1 mRNAs, but not to rRNAs. This chain is Caprin-1 (Caprin1), found in Rattus norvegicus (Rat).